A 105-amino-acid polypeptide reads, in one-letter code: MSALTRLASFARVGGRLFRSGRARTAGDGGVRHAGGGVHIEPRYRQFPQLTRSQVFQSEFFSGLMWFWILWRFWHDSEEVLGHFPYPDPSQWTDEELGIPPDDED.

The transit peptide at 1–33 (MSALTRLASFARVGGRLFRSGRARTAGDGGVRH) directs the protein to the mitochondrion. The disordered stretch occupies residues 85–105 (PYPDPSQWTDEELGIPPDDED). Residues 93–105 (TDEELGIPPDDED) are compositionally biased toward acidic residues.

Belongs to the complex I NDUFB2 subunit family. As to quaternary structure, complex I is composed of 45 different subunits.

It is found in the mitochondrion inner membrane. Its function is as follows. Accessory subunit of the mitochondrial membrane respiratory chain NADH dehydrogenase (Complex I), that is believed not to be involved in catalysis. Complex I functions in the transfer of electrons from NADH to the respiratory chain. The immediate electron acceptor for the enzyme is believed to be ubiquinone. This is NADH dehydrogenase [ubiquinone] 1 beta subcomplex subunit 2, mitochondrial (NDUFB2) from Gorilla gorilla gorilla (Western lowland gorilla).